The chain runs to 357 residues: Probable protein phosphatase 2C 60 (357 aa).

In terms of domain architecture, PPM-type phosphatase spans 23 to 329 (RYGLSSMQGW…DNMTMILVRF (307 aa)). Mn(2+)-binding residues include D57, G58, D272, and D320. The disordered stretch occupies residues 331-357 (NPTPSETELKPEASQAEGNHDEPSSSN). Positions 348–357 (GNHDEPSSSN) are enriched in basic and acidic residues.

Belongs to the PP2C family. Mg(2+) serves as cofactor. Mn(2+) is required as a cofactor.

It carries out the reaction O-phospho-L-seryl-[protein] + H2O = L-seryl-[protein] + phosphate. It catalyses the reaction O-phospho-L-threonyl-[protein] + H2O = L-threonyl-[protein] + phosphate. The protein is Probable protein phosphatase 2C 60 of Arabidopsis thaliana (Mouse-ear cress).